The chain runs to 178 residues: Probable inosine/xanthosine triphosphatase (178 aa).

Belongs to the YjjX NTPase family. Homodimer. The cofactor is Mg(2+). Mn(2+) is required as a cofactor.

The enzyme catalyses XTP + H2O = XDP + phosphate + H(+). The catalysed reaction is ITP + H2O = IDP + phosphate + H(+). Functionally, phosphatase that hydrolyzes non-canonical purine nucleotides such as XTP and ITP to their respective diphosphate derivatives. Probably excludes non-canonical purines from DNA/RNA precursor pool, thus preventing their incorporation into DNA/RNA and avoiding chromosomal lesions. This is Probable inosine/xanthosine triphosphatase from Pyrobaculum aerophilum (strain ATCC 51768 / DSM 7523 / JCM 9630 / CIP 104966 / NBRC 100827 / IM2).